Here is a 141-residue protein sequence, read N- to C-terminus: Large ribosomal subunit protein uL11 (141 aa).

The protein belongs to the universal ribosomal protein uL11 family. Part of the ribosomal stalk of the 50S ribosomal subunit. Interacts with L10 and the large rRNA to form the base of the stalk. L10 forms an elongated spine to which L12 dimers bind in a sequential fashion forming a multimeric L10(L12)X complex. In terms of processing, one or more lysine residues are methylated.

Its function is as follows. Forms part of the ribosomal stalk which helps the ribosome interact with GTP-bound translation factors. The sequence is that of Large ribosomal subunit protein uL11 from Geobacter sulfurreducens (strain ATCC 51573 / DSM 12127 / PCA).